The primary structure comprises 224 residues: 3-dehydroquinate dehydratase (224 aa).

3-dehydroquinate is bound by residues glutamate 30–arginine 32 and arginine 62. Catalysis depends on histidine 118, which acts as the Proton donor/acceptor. Catalysis depends on lysine 143, which acts as the Schiff-base intermediate with substrate. Positions 186, 205, and 209 each coordinate 3-dehydroquinate.

Belongs to the type-I 3-dehydroquinase family. Homodimer.

The catalysed reaction is 3-dehydroquinate = 3-dehydroshikimate + H2O. It functions in the pathway metabolic intermediate biosynthesis; chorismate biosynthesis; chorismate from D-erythrose 4-phosphate and phosphoenolpyruvate: step 3/7. Involved in the third step of the chorismate pathway, which leads to the biosynthesis of aromatic amino acids. Catalyzes the cis-dehydration of 3-dehydroquinate (DHQ) and introduces the first double bond of the aromatic ring to yield 3-dehydroshikimate. The protein is 3-dehydroquinate dehydratase of Streptococcus suis (strain 98HAH33).